The primary structure comprises 517 residues: Cobyric acid synthase (517 aa).

A GATase cobBQ-type domain is found at 253-453 (EVEIAVIKLP…IHGILDNDSL (201 aa)). Cysteine 334 serves as the catalytic Nucleophile. The active site involves histidine 445.

Belongs to the CobB/CobQ family. CobQ subfamily.

It participates in cofactor biosynthesis; adenosylcobalamin biosynthesis. Catalyzes amidations at positions B, D, E, and G on adenosylcobyrinic A,C-diamide. NH(2) groups are provided by glutamine, and one molecule of ATP is hydrogenolyzed for each amidation. This chain is Cobyric acid synthase, found in Moorella thermoacetica (strain ATCC 39073 / JCM 9320).